A 92-amino-acid polypeptide reads, in one-letter code: MARIAPNEDSTMSTAYIIFNSSVAAVVDTEIANGANVTFSTVTVKEEINANRDFNLVNAQNGKISRAKRWGNEASKCEYFGREINPTEFFIK.

As to quaternary structure, interacts with host rRNA-guided surveillance complex (Csy complex) used to recognize the invading DNA; this interaction prevents DNA hybridization in the Csy complex. Binds to a the Csy spiral backbone.

With respect to regulation, inhibited by phage protein Aca2 repressor (AC H9C180) both at the transcription and translatio levels. Functionally, anti-CRISPR protein that inactivates the type I-F CRISPR-Cas systems of the host by blocking its ability to recognize target DNA. Inhibits therefore the degradation of the viral DNA by the host. This Pectobacterium phage ZF40 (Bacteriophage ZF40) protein is Anti-CRISPR protein AcrF8.